Reading from the N-terminus, the 585-residue chain is Arginine--tRNA ligase (585 aa).

Positions Pro-126–His-136 match the 'HIGH' region motif.

This sequence belongs to the class-I aminoacyl-tRNA synthetase family. As to quaternary structure, monomer.

It localises to the cytoplasm. It carries out the reaction tRNA(Arg) + L-arginine + ATP = L-arginyl-tRNA(Arg) + AMP + diphosphate. This is Arginine--tRNA ligase from Crocosphaera subtropica (strain ATCC 51142 / BH68) (Cyanothece sp. (strain ATCC 51142)).